The chain runs to 183 residues: Lipid droplet coating protein mpl1 (183 aa).

The protein belongs to the perilipin family.

Its subcellular location is the lipid droplet. Its function is as follows. Lipid droplet coating protein that regulates lipid metabolism, appressorial turgor pressure, and virulence. Appressorial turgor pressure is important for breaching the insect cuticle during infection. In Metarhizium robertsii (strain ARSEF 23 / ATCC MYA-3075) (Metarhizium anisopliae (strain ARSEF 23)), this protein is Lipid droplet coating protein mpl1.